The primary structure comprises 122 residues: Large ribosomal subunit protein uL14c (122 aa).

It belongs to the universal ribosomal protein uL14 family. As to quaternary structure, part of the 50S ribosomal subunit.

Its subcellular location is the plastid. The protein resides in the cyanelle. In terms of biological role, binds to 23S rRNA. The sequence is that of Large ribosomal subunit protein uL14c from Cyanophora paradoxa.